We begin with the raw amino-acid sequence, 158 residues long: Glycine/sarcosine/betaine reductase complex component A (158 aa).

The active site involves selenocysteine 44. Position 44 (selenocysteine 44) is a non-standard amino acid, selenocysteine.

It belongs to the GrdA family. Monomer. Component of the glycine, sarcosine and betaine reductase complexes, together with components B and C.

The enzyme catalyses acetyl phosphate + [thioredoxin]-disulfide + NH4(+) + H2O = [thioredoxin]-dithiol + glycine + phosphate + H(+). The catalysed reaction is acetyl phosphate + methylamine + [thioredoxin]-disulfide + H2O = sarcosine + [thioredoxin]-dithiol + phosphate + H(+). It catalyses the reaction acetyl phosphate + trimethylamine + [thioredoxin]-disulfide + H2O = glycine betaine + [thioredoxin]-dithiol + phosphate + H(+). In terms of biological role, in the first step of glycine, betaine and sarcosine reductases, the substrate is bound to component PB via a Schiff base intermediate. Then the PB-activated substrate is nucleophilically attacked by the selenol anion of component PA to transform it to a carboxymethylated selenoether and the respective amine. By action of component PC, acetyl phosphate is formed, leaving component PA in its oxidized state. Finally component PA becomes reduced by the thioredoxin system to start a new catalytic cycle of reductive deamination. This chain is Glycine/sarcosine/betaine reductase complex component A, found in Alkaliphilus metalliredigens (strain QYMF).